The chain runs to 338 residues: MELCYENVNGSCIKSSYSPWPRAILYAVLGLGALLAVFGNLLVITAILHFKQLHTPTNFLVASLACADFLVGVTVMPFSTVRSVEGCWYFGDTYCKFHTCFDTSFCFASLFHLCCISIDRYVAVTDPLTYPTKFTISVSGVCIALSWFFSVTYSFSIFYTGANEEGIEELVVALTCVGGCQAPLNQNWVLLCFLLFFLPTVVMVFLYGRIFLVAKQQARKIEGSANQPQASSESYKERVARRERKAAKTLGIAMAAFLVSWLPYIIDAVIDAYMNFITPAYVYEILVWCVYYNSAMNPLIYAFFYPWFRKAIKLIVSGKVFRADSSRTNLFSEEAGAG.

Residues 1-23 lie on the Extracellular side of the membrane; it reads MELCYENVNGSCIKSSYSPWPRA. Residue Asn-9 is glycosylated (N-linked (GlcNAc...) asparagine). 2 disulfides stabilise this stretch: Cys-12–Cys-176 and Cys-95–Cys-180. A helical membrane pass occupies residues 24–48; the sequence is ILYAVLGLGALLAVFGNLLVITAIL. At 49 to 58 the chain is on the cytoplasmic side; sequence HFKQLHTPTN. A helical membrane pass occupies residues 59-80; it reads FLVASLACADFLVGVTVMPFST. Residues 81-95 lie on the Extracellular side of the membrane; the sequence is VRSVEGCWYFGDTYC. The chain crosses the membrane as a helical span at residues 96–118; it reads KFHTCFDTSFCFASLFHLCCISI. Positions 102 and 103 each coordinate spermidine. Topologically, residues 119–138 are cytoplasmic; it reads DRYVAVTDPLTYPTKFTISV. The chain crosses the membrane as a helical span at residues 139-160; it reads SGVCIALSWFFSVTYSFSIFYT. The Extracellular portion of the chain corresponds to 161 to 186; sequence GANEEGIEELVVALTCVGGCQAPLNQ. Residues 164–177 are extracellular Loop 2 (ECL2); the sequence is EEGIEELVVALTCV. A helical transmembrane segment spans residues 187 to 208; the sequence is NWVLLCFLLFFLPTVVMVFLYG. Residues 209–246 lie on the Cytoplasmic side of the membrane; it reads RIFLVAKQQARKIEGSANQPQASSESYKERVARRERKA. The helical transmembrane segment at 247–270 threads the bilayer; sequence AKTLGIAMAAFLVSWLPYIIDAVI. Over 271-283 the chain is Extracellular; that stretch reads DAYMNFITPAYVY. A helical membrane pass occupies residues 284–304; the sequence is EILVWCVYYNSAMNPLIYAFF. The Cytoplasmic segment spans residues 305 to 338; sequence YPWFRKAIKLIVSGKVFRADSSRTNLFSEEAGAG.

The protein belongs to the G-protein coupled receptor 1 family. In terms of tissue distribution, mainly expressed in neurons of the olfactory epithelium. Also expressed in the intestine.

Its subcellular location is the cell membrane. Olfactory receptor specific for trace amines, such as triethylamine, N-methylpiperidine, N,N-dimethylcyclohexylamine (DMCHA), beta-phenylethylamine (beta-PEA), cadaverine (CAD) and polyamines such as spermidine. Trace amine compounds are enriched in animal body fluids and act on trace amine-associated receptors (TAARs) to elicit both intraspecific and interspecific innate behaviors. Trace amine-binding causes a conformation change that triggers signaling via G(s)-class of G alpha proteins (GNAL or GNAS). In mature olfactory sensory neurons, Taar9 is coupled with GNAL/G(olf)G alpha protein and mediates activation of adenylate cyclase activity to activate cAMP signaling and eventually transmit odorant signals to achieve membrane depolarization. In immature olfactory sensory neurons, Taar9 is coupled with GNAS/G(s) G alpha proteins. In Rattus norvegicus (Rat), this protein is Trace amine-associated receptor 9.